Here is a 297-residue protein sequence, read N- to C-terminus: 4-hydroxy-tetrahydrodipicolinate synthase (297 aa).

Position 46 (Thr-46) interacts with pyruvate. Residue Tyr-136 is the Proton donor/acceptor of the active site. Lys-165 (schiff-base intermediate with substrate) is an active-site residue. A pyruvate-binding site is contributed by Thr-206.

This sequence belongs to the DapA family. As to quaternary structure, homotetramer; dimer of dimers.

It is found in the cytoplasm. The catalysed reaction is L-aspartate 4-semialdehyde + pyruvate = (2S,4S)-4-hydroxy-2,3,4,5-tetrahydrodipicolinate + H2O + H(+). The protein operates within amino-acid biosynthesis; L-lysine biosynthesis via DAP pathway; (S)-tetrahydrodipicolinate from L-aspartate: step 3/4. Its function is as follows. Catalyzes the condensation of (S)-aspartate-beta-semialdehyde [(S)-ASA] and pyruvate to 4-hydroxy-tetrahydrodipicolinate (HTPA). This chain is 4-hydroxy-tetrahydrodipicolinate synthase, found in Sulfurimonas denitrificans (strain ATCC 33889 / DSM 1251) (Thiomicrospira denitrificans (strain ATCC 33889 / DSM 1251)).